Consider the following 270-residue polypeptide: Ribitol operon repressor (270 aa).

Positions 1 to 61 (MKKITIYDLA…INRQASMLRS (61 aa)) constitute an HTH lacI-type domain. Residues 6–25 (IYDLAELSGVSASAVSAILN) constitute a DNA-binding region (H-T-H motif).

Functionally, repressor for the genes of the ribitol operon. Binds D-ribulose as an inducer. This is Ribitol operon repressor (rbtR) from Klebsiella aerogenes (Enterobacter aerogenes).